The primary structure comprises 324 residues: Membrane protein UL8 (324 aa).

Positions 36–138 are immunoglobulin V-like domain; the sequence is ILESIIYVSG…LWYNLTVKPK (103 aa). The chain crosses the membrane as a helical span at residues 278–298; that stretch reads THYSWMLIIAIILIIFIIICL.

Belongs to the RL11 family. Highly glycosylated.

The protein resides in the host cell membrane. Its function is as follows. Plays a role in the inhibition of pro-inflammatory cytokine production. This effect is mediated by the conserved Ig-like domain. The protein is Membrane protein UL8 (UL8) of Homo sapiens (Human).